The sequence spans 460 residues: Elongation factor 1-alpha (460 aa).

At G2 the chain carries N,N,N-trimethylglycine. N6,N6-dimethyllysine; alternate is present on K3. Residue K3 is modified to N6-methyllysine; alternate. Residues 5–240 (KLHVNVVVIG…DAIEPPVRPS (236 aa)) enclose the tr-type G domain. The interval 14-21 (GHVDSGKS) is G1. 14–21 (GHVDSGKS) serves as a coordination point for GTP. The residue at position 30 (K30) is an N6-methyllysine. The interval 70 to 74 (GITID) is G2. At K79 the chain carries N6,N6,N6-trimethyllysine. Residues 91–94 (DAPG) are G3. Residues 91-95 (DAPGH) and 153-156 (NKMD) contribute to the GTP site. The interval 153 to 156 (NKMD) is G4. The interval 192–194 (SGW) is G5. N6,N6-dimethyllysine; alternate is present on K316. Position 316 is an N6-methyllysine; alternate (K316). K390 is modified (N6-methyllysine).

It belongs to the TRAFAC class translation factor GTPase superfamily. Classic translation factor GTPase family. EF-Tu/EF-1A subfamily.

It is found in the cytoplasm. Its function is as follows. This protein promotes the GTP-dependent binding of aminoacyl-tRNA to the A-site of ribosomes during protein biosynthesis. In Schizophyllum commune (Split gill fungus), this protein is Elongation factor 1-alpha (TEF1).